Here is a 557-residue protein sequence, read N- to C-terminus: Formate--tetrahydrofolate ligase (557 aa).

65–72 (TPAGEGKT) contributes to the ATP binding site.

It belongs to the formate--tetrahydrofolate ligase family.

It carries out the reaction (6S)-5,6,7,8-tetrahydrofolate + formate + ATP = (6R)-10-formyltetrahydrofolate + ADP + phosphate. The protein operates within one-carbon metabolism; tetrahydrofolate interconversion. This chain is Formate--tetrahydrofolate ligase, found in Methylorubrum extorquens (strain PA1) (Methylobacterium extorquens).